Consider the following 585-residue polypeptide: Serine/threonine-protein kinase PknI (585 aa).

Over 1–349 the chain is Cytoplasmic; it reads MALASGVTFA…ASPTRRRPRR (349 aa). One can recognise a Protein kinase domain in the interval 12–252; the sequence is YTVVRMLGCS…SCREFADAMN (241 aa). Residues 18–26 and Lys41 contribute to the ATP site; that span reads LGCSAMGEV. The ADP site is built by Lys41, Asp90, and Val92. The active-site Proton acceptor is Asp137. A helical transmembrane segment spans residues 350–370; it reads ILVGAVAVLLLAGLFAVGIVI. Residues 371–585 are Extracellular-facing; it reads GRKTNTTATE…PTTTAPGPGR (215 aa). Positions 546 to 585 are disordered; it reads SGDLPPAVTVPDPATIPDTPDTTSTATLTPPTTTAPGPGR. Low complexity predominate over residues 554-585; the sequence is TVPDPATIPDTPDTTSTATLTPPTTTAPGPGR.

This sequence belongs to the protein kinase superfamily. Ser/Thr protein kinase family. Mn(2+) serves as cofactor. In terms of processing, autophosphorylated at serine and threonine residues.

The protein localises to the cytoplasm. Its subcellular location is the cell membrane. It carries out the reaction L-seryl-[protein] + ATP = O-phospho-L-seryl-[protein] + ADP + H(+). The enzyme catalyses L-threonyl-[protein] + ATP = O-phospho-L-threonyl-[protein] + ADP + H(+). Plays an important role in slowing down the growth of mycobacteria within the infected host. The protein is Serine/threonine-protein kinase PknI (pknI) of Mycobacterium bovis (strain ATCC BAA-935 / AF2122/97).